The sequence spans 136 residues: Mediator of RNA polymerase II transcription subunit 31 (136 aa).

A compositionally biased stretch (low complexity) spans 117 to 128; that stretch reads AEQQQQQQPQAP. Residues 117–136 form a disordered region; it reads AEQQQQQQPQAPSHANTTSK.

It belongs to the Mediator complex subunit 31 family. In terms of assembly, component of the Mediator complex.

Its subcellular location is the nucleus. Functionally, component of the Mediator complex, a coactivator involved in the regulated transcription of nearly all RNA polymerase II-dependent genes. Mediator functions as a bridge to convey information from gene-specific regulatory proteins to the basal RNA polymerase II transcription machinery. Mediator is recruited to promoters by direct interactions with regulatory proteins and serves as a scaffold for the assembly of a functional preinitiation complex with RNA polymerase II and the general transcription factors. In Danio rerio (Zebrafish), this protein is Mediator of RNA polymerase II transcription subunit 31 (med31).